We begin with the raw amino-acid sequence, 188 residues long: Elongation factor P (188 aa).

Belongs to the elongation factor P family.

The protein localises to the cytoplasm. It participates in protein biosynthesis; polypeptide chain elongation. Its function is as follows. Involved in peptide bond synthesis. Stimulates efficient translation and peptide-bond synthesis on native or reconstituted 70S ribosomes in vitro. Probably functions indirectly by altering the affinity of the ribosome for aminoacyl-tRNA, thus increasing their reactivity as acceptors for peptidyl transferase. This is Elongation factor P from Chlorobium chlorochromatii (strain CaD3).